The sequence spans 248 residues: Triosephosphate isomerase (248 aa).

9 to 11 (NWK) is a binding site for substrate. The active-site Electrophile is the histidine 94. The active-site Proton acceptor is glutamate 166. Substrate is bound by residues glycine 172, serine 212, and 233–234 (GG).

The protein belongs to the triosephosphate isomerase family. As to quaternary structure, homodimer.

The protein resides in the cytoplasm. It carries out the reaction D-glyceraldehyde 3-phosphate = dihydroxyacetone phosphate. It participates in carbohydrate biosynthesis; gluconeogenesis. Its pathway is carbohydrate degradation; glycolysis; D-glyceraldehyde 3-phosphate from glycerone phosphate: step 1/1. In terms of biological role, involved in the gluconeogenesis. Catalyzes stereospecifically the conversion of dihydroxyacetone phosphate (DHAP) to D-glyceraldehyde-3-phosphate (G3P). The polypeptide is Triosephosphate isomerase (Thermoanaerobacter sp. (strain X514)).